Reading from the N-terminus, the 258-residue chain is UPF0246 protein YaaA (258 aa).

This sequence belongs to the UPF0246 family.

The sequence is that of UPF0246 protein YaaA from Escherichia coli (strain K12 / MC4100 / BW2952).